A 333-amino-acid polypeptide reads, in one-letter code: MKIIAYGARVDEIQYFKQWAKDTGNTLEYHTEFLDENTVEWAKGFDGINSLQTTPYAAGVFEKMHAYGIKFLTIRNVGTDNIDMTAMKQYGIRLSNVPAYSPAAIAEFALTDTLYLLRNMGKVQAQLQAGDYEKAGTFIGKELGQQTVGVMGTGHIGQVAIKLFKGFGAKVIAYDPYPMKGDHPDFDYVSLEDLFKQSDVIDLHVPGIEQNTHIINEAAFNLMKPGAIVINTARPNLIDTQAMLSNLKSGKLAGVGIDTYEYETEDLLNLAKHGSFKDPLWDELLGMPNVVLSPHIAYYTETAVHNMVYFSLQHLVDFLTKGETSTEVTGPAK.

Residue Tyr-100 coordinates 4-methyl-2-oxopentanoate. Residues His-155, Ile-156, Asp-175, Val-205, Asn-211, Thr-232, Arg-234, and Asp-258 each coordinate NAD(+). Residue Arg-234 is part of the active site. The active site involves Glu-263. Position 295 (His-295) interacts with 4-methyl-2-oxopentanoate. Residue His-295 is the Proton donor of the active site.

This sequence belongs to the D-isomer specific 2-hydroxyacid dehydrogenase family. Homodimer.

It carries out the reaction a (2R)-2-hydroxycarboxylate + NAD(+) = a 2-oxocarboxylate + NADH + H(+). It catalyses the reaction (2R)-hydroxy-4-methylpentanoate + NAD(+) = 4-methyl-2-oxopentanoate + NADH + H(+). The catalysed reaction is (R)-3-phenyllactate + NAD(+) = 3-phenylpyruvate + NADH + H(+). Completely inhibited In the presence of 0.1 mM Hg(2+). No influence on the activity could be detected with Mg(2+) and Ca(2+) and only very weak effects with Cd(2+), Co(2+) and Mn(2+). Reducing agents and thiol group reagents do not affect catalytic activity. Catalyzes the NADH-dependent reversible reduction of various 2-ketocarboxylic acids to the corresponding D-2-hydroxycarboxylic acids. In vitro can use various substrates, including 4-methyl-2-oxopentanoate (2-oxoisocaproate), 2-oxopentanoate, 2-oxohexanoate and phenylpyruvate. In Lacticaseibacillus paracasei (Lactobacillus paracasei), this protein is D-2-hydroxyacid dehydrogenase (NAD+).